Here is a 278-residue protein sequence, read N- to C-terminus: Aliphatic sulfonates import ATP-binding protein SsuB (278 aa).

In terms of domain architecture, ABC transporter spans 15–236; sequence LVLRDLSKRF…SQGDAAFAAL (222 aa). 47–54 contributes to the ATP binding site; the sequence is GRSGCGKS. Basic and acidic residues predominate over residues 251–264; the sequence is PERESFTHPNDGEP. The tract at residues 251-278 is disordered; it reads PERESFTHPNDGEPRWPGVPAHGVRWAV.

The protein belongs to the ABC transporter superfamily. Aliphatic sulfonates importer (TC 3.A.1.17.2) family. As to quaternary structure, the complex is composed of two ATP-binding proteins (SsuB), two transmembrane proteins (SsuC) and a solute-binding protein (SsuA).

The protein resides in the cell inner membrane. The enzyme catalyses ATP + H2O + aliphatic sulfonate-[sulfonate-binding protein]Side 1 = ADP + phosphate + aliphatic sulfonateSide 2 + [sulfonate-binding protein]Side 1.. Functionally, part of the ABC transporter complex SsuABC involved in aliphatic sulfonates import. Responsible for energy coupling to the transport system. The protein is Aliphatic sulfonates import ATP-binding protein SsuB of Albidiferax ferrireducens (strain ATCC BAA-621 / DSM 15236 / T118) (Rhodoferax ferrireducens).